Here is a 121-residue protein sequence, read N- to C-terminus: Small ribosomal subunit protein bS6 (121 aa).

Residues 102–121 (MMRNVEREEARKAQQQEYAA) form a disordered region. The segment covering 105-115 (NVEREEARKAQ) has biased composition (basic and acidic residues).

This sequence belongs to the bacterial ribosomal protein bS6 family.

Binds together with bS18 to 16S ribosomal RNA. In Polaromonas sp. (strain JS666 / ATCC BAA-500), this protein is Small ribosomal subunit protein bS6.